The chain runs to 74 residues: uncharacterized protein (74 aa).

The protein resides in the mitochondrion. This is an uncharacterized protein from Marchantia polymorpha (Common liverwort).